A 794-amino-acid chain; its full sequence is Copper-exporting P-type ATPase (794 aa).

2 HMA domains span residues 5 to 70 (KKTT…YGVL) and 72 to 138 (ETAE…YDAQ). Cu(+)-binding residues include C16, C19, C83, and C86. 6 consecutive transmembrane segments (helical) span residues 162-182 (IISAVLAAPLLLTMLVHLFGI), 187-207 (IFMNPWFQFILATPVQFIIGW), 224-244 (MDVLVALGTSAAYFYSLYEMV), 250-270 (ANVMPHLYFETSAVLITLILF), 411-431 (YFVPIVVGIAVLTFIIWIAFV), and 438-458 (PALVAAIAVLVIACPCALGLA). D495 functions as the 4-aspartylphosphate intermediate in the catalytic mechanism. Mg(2+) contacts are provided by D689 and D693. A run of 2 helical transmembrane segments spans residues 747–766 (LFWAFGYNVAGIPIAALGLL) and 770–789 (IAGAAMALSSVSVVTNALRL).

The protein belongs to the cation transport ATPase (P-type) (TC 3.A.3) family. Type IB subfamily.

The protein resides in the cell membrane. The catalysed reaction is Cu(+)(in) + ATP + H2O = Cu(+)(out) + ADP + phosphate + H(+). Functionally, involved in copper export. The sequence is that of Copper-exporting P-type ATPase (copA) from Staphylococcus saprophyticus subsp. saprophyticus (strain ATCC 15305 / DSM 20229 / NCIMB 8711 / NCTC 7292 / S-41).